Here is a 110-residue protein sequence, read N- to C-terminus: uncharacterized protein (110 aa).

Disordered regions lie at residues 1–42 (MEWG…RAQQ) and 66–110 (RQLG…AAEP). The stretch at 36–68 (REERAQQLLDAVEQRQRQLLDTIAACEEMLRQL) forms a coiled coil.

This is an uncharacterized protein from Homo sapiens (Human).